The chain runs to 207 residues: MSGPHHCSADCDEHPFESGPNDTLYSCIRKESIVTLNEAVPDSGKLVFKPWDLRYDDTDIVESDADDQLLFQVPFAGAATLKSILVRIFPNETAPHSFSLFPNRTDLDFDTIGDVQATETFEFPLTFEGSHIFEFPVKTRLYQNLQNLNIFFTKSDGSDDPTQIAYIGLRGSFVPFKGDPVVTIYEATPRPSDHPKVNQEEVFRSYY.

The PITH domain occupies 13-189 (EHPFESGPND…PVVTIYEATP (177 aa)).

The protein belongs to the PITHD1 family.

It is found in the cytoplasm. It localises to the nucleus. The protein is PITH domain-containing protein P35G2.02 of Schizosaccharomyces pombe (strain 972 / ATCC 24843) (Fission yeast).